The primary structure comprises 224 residues: NADH-quinone oxidoreductase subunit B (224 aa).

[4Fe-4S] cluster is bound by residues Cys-67, Cys-68, Cys-133, and Cys-162. The disordered stretch occupies residues Asp-200–Ile-224. The segment covering Met-201–Ile-224 has biased composition (basic and acidic residues).

This sequence belongs to the complex I 20 kDa subunit family. NDH-1 is composed of 14 different subunits. Subunits NuoB, C, D, E, F, and G constitute the peripheral sector of the complex. [4Fe-4S] cluster serves as cofactor.

It localises to the cell inner membrane. The catalysed reaction is a quinone + NADH + 5 H(+)(in) = a quinol + NAD(+) + 4 H(+)(out). Its function is as follows. NDH-1 shuttles electrons from NADH, via FMN and iron-sulfur (Fe-S) centers, to quinones in the respiratory chain. The immediate electron acceptor for the enzyme in this species is believed to be ubiquinone. Couples the redox reaction to proton translocation (for every two electrons transferred, four hydrogen ions are translocated across the cytoplasmic membrane), and thus conserves the redox energy in a proton gradient. The polypeptide is NADH-quinone oxidoreductase subunit B (Aeromonas salmonicida (strain A449)).